The chain runs to 105 residues: uncharacterized protein (105 aa).

A helical transmembrane segment spans residues 4–26 (TQILLILFVGILVTTPHDIFIII).

It is found in the membrane. This is an uncharacterized protein from Rickettsia conorii (strain ATCC VR-613 / Malish 7).